Consider the following 490-residue polypeptide: Aspartyl/glutamyl-tRNA(Asn/Gln) amidotransferase subunit B (490 aa).

It belongs to the GatB/GatE family. GatB subfamily. As to quaternary structure, heterotrimer of A, B and C subunits.

It catalyses the reaction L-glutamyl-tRNA(Gln) + L-glutamine + ATP + H2O = L-glutaminyl-tRNA(Gln) + L-glutamate + ADP + phosphate + H(+). The catalysed reaction is L-aspartyl-tRNA(Asn) + L-glutamine + ATP + H2O = L-asparaginyl-tRNA(Asn) + L-glutamate + ADP + phosphate + 2 H(+). Its function is as follows. Allows the formation of correctly charged Asn-tRNA(Asn) or Gln-tRNA(Gln) through the transamidation of misacylated Asp-tRNA(Asn) or Glu-tRNA(Gln) in organisms which lack either or both of asparaginyl-tRNA or glutaminyl-tRNA synthetases. The reaction takes place in the presence of glutamine and ATP through an activated phospho-Asp-tRNA(Asn) or phospho-Glu-tRNA(Gln). This Burkholderia pseudomallei (strain K96243) protein is Aspartyl/glutamyl-tRNA(Asn/Gln) amidotransferase subunit B.